A 273-amino-acid chain; its full sequence is Dermonecrotic toxin LsaSicTox-alphaIB1ai (273 aa).

The active site involves H5. Mg(2+) contacts are provided by E25 and D27. H41 acts as the Nucleophile in catalysis. Disulfide bonds link C45/C51 and C47/C190. D85 is a Mg(2+) binding site.

Belongs to the arthropod phospholipase D family. Class II subfamily. The cofactor is Mg(2+). In terms of tissue distribution, expressed by the venom gland.

Its subcellular location is the secreted. It carries out the reaction an N-(acyl)-sphingosylphosphocholine = an N-(acyl)-sphingosyl-1,3-cyclic phosphate + choline. It catalyses the reaction an N-(acyl)-sphingosylphosphoethanolamine = an N-(acyl)-sphingosyl-1,3-cyclic phosphate + ethanolamine. The catalysed reaction is a 1-acyl-sn-glycero-3-phosphocholine = a 1-acyl-sn-glycero-2,3-cyclic phosphate + choline. The enzyme catalyses a 1-acyl-sn-glycero-3-phosphoethanolamine = a 1-acyl-sn-glycero-2,3-cyclic phosphate + ethanolamine. Its function is as follows. Dermonecrotic toxins cleave the phosphodiester linkage between the phosphate and headgroup of certain phospholipids (sphingolipid and lysolipid substrates), forming an alcohol (often choline) and a cyclic phosphate. This toxin acts on sphingomyelin (SM). It may also act on ceramide phosphoethanolamine (CPE), lysophosphatidylcholine (LPC) and lysophosphatidylethanolamine (LPE), but not on lysophosphatidylserine (LPS), and lysophosphatidylglycerol (LPG). It acts by transphosphatidylation, releasing exclusively cyclic phosphate products as second products. Induces dermonecrosis, hemolysis, increased vascular permeability, edema, inflammatory response, and platelet aggregation. In Loxosceles sabina (Tucson recluse spider), this protein is Dermonecrotic toxin LsaSicTox-alphaIB1ai.